A 122-amino-acid polypeptide reads, in one-letter code: Putative ankyrin repeat protein L22 (122 aa).

ANK repeat units follow at residues 3–32 (DNNYAVRLASRNGYIEVVKYLVSIGADIKA), 33–62 (DDDYAVKWASRYGHLRVVKFLVSQGADIRV), 63–92 (NNDYAVQLASENGHFDVVKYLVSQDANIRA), and 94–122 (DDYAVKLASVNGHVEVVKYLVSQGAVLNQ).

This Acanthamoeba polyphaga (Amoeba) protein is Putative ankyrin repeat protein L22.